The primary structure comprises 447 residues: UPF0210 protein LSEI_0897 (447 aa).

This sequence belongs to the UPF0210 family. In terms of assembly, homodimer.

The protein is UPF0210 protein LSEI_0897 of Lacticaseibacillus paracasei (strain ATCC 334 / BCRC 17002 / CCUG 31169 / CIP 107868 / KCTC 3260 / NRRL B-441) (Lactobacillus paracasei).